The chain runs to 1396 residues: DNA-directed RNA polymerase subunit beta' (1396 aa).

Residues C73, C75, C88, and C91 each contribute to the Zn(2+) site. Residues D467, D469, and D471 each contribute to the Mg(2+) site. Positions 817, 891, 898, and 901 each coordinate Zn(2+).

Belongs to the RNA polymerase beta' chain family. In terms of assembly, the RNAP catalytic core consists of 2 alpha, 1 beta, 1 beta' and 1 omega subunit. When a sigma factor is associated with the core the holoenzyme is formed, which can initiate transcription. The cofactor is Mg(2+). Requires Zn(2+) as cofactor.

It carries out the reaction RNA(n) + a ribonucleoside 5'-triphosphate = RNA(n+1) + diphosphate. In terms of biological role, DNA-dependent RNA polymerase catalyzes the transcription of DNA into RNA using the four ribonucleoside triphosphates as substrates. In Orientia tsutsugamushi (strain Boryong) (Rickettsia tsutsugamushi), this protein is DNA-directed RNA polymerase subunit beta'.